Consider the following 166-residue polypeptide: 2-amino-4-hydroxy-6-hydroxymethyldihydropteridine pyrophosphokinase (166 aa).

Belongs to the HPPK family.

The catalysed reaction is 6-hydroxymethyl-7,8-dihydropterin + ATP = (7,8-dihydropterin-6-yl)methyl diphosphate + AMP + H(+). It participates in cofactor biosynthesis; tetrahydrofolate biosynthesis; 2-amino-4-hydroxy-6-hydroxymethyl-7,8-dihydropteridine diphosphate from 7,8-dihydroneopterin triphosphate: step 4/4. Its function is as follows. Catalyzes the transfer of pyrophosphate from adenosine triphosphate (ATP) to 6-hydroxymethyl-7,8-dihydropterin, an enzymatic step in folate biosynthesis pathway. This is 2-amino-4-hydroxy-6-hydroxymethyldihydropteridine pyrophosphokinase (folK) from Streptococcus pyogenes serotype M1.